Consider the following 271-residue polypeptide: MTLADRVPLALAALAYLALVSGVRFHLSEQNDVLPGGSQARRPFFQGARIVGGSVASEGQFPHQVALLRGNALTCGGSLIESRWVLTAAHCVYNGALVVPASSIVVVAGSVSLSNGVRRAVARVIPHERYGNFKNDVALLQLQLSLPSSAYIRPIALRTTSVPAGSEVVISGWGRMYQGGPVSNMLRYNRATVVADQQCRMATGISTGLICFTSPVNNGACNGDSGGPAILNNQLVGVANFIINYCGSASPDGYARVSDFVTWIQTTMRRY.

An N-terminal signal peptide occupies residues 1–22 (MTLADRVPLALAALAYLALVSG). The propeptide at 23 to 49 (VRFHLSEQNDVLPGGSQARRPFFQGAR) is activation peptide. Residues 50–269 (IVGGSVASEG…FVTWIQTTMR (220 aa)) enclose the Peptidase S1 domain. A disulfide bond links cysteine 75 and cysteine 91. Active-site charge relay system residues include histidine 90 and aspartate 136. 2 disulfide bridges follow: cysteine 199–cysteine 211 and cysteine 221–cysteine 246. Serine 225 (charge relay system) is an active-site residue.

The protein belongs to the peptidase S1 family. Highest level of adult expression is in the thorax.

This chain is Serine protease SP24D (Sp24D), found in Anopheles gambiae (African malaria mosquito).